We begin with the raw amino-acid sequence, 277 residues long: Homeobox protein Nkx-6.2 (277 aa).

The repressor domain stretch occupies residues Ala89–Leu142. Disordered regions lie at residues Leu132 to Phe155 and Glu210 to Lys250. The segment at residues Lys148 to His207 is a DNA-binding region (homeobox). Residues Lys216–Lys226 are compositionally biased toward basic and acidic residues.

As to expression, highest expression in brain.

It localises to the nucleus. Functionally, transcription factor with repressor activity involved in the regulation of axon-glial interactions at myelin paranodes in oligodendrocytes. Binds to the consensus DNA sequence 5'-(A/T)TTAATGA-3'. In oligodendrocytes, binds to MBP and PLP1 promoter regions. The polypeptide is Homeobox protein Nkx-6.2 (NKX6-2) (Homo sapiens (Human)).